A 346-amino-acid chain; its full sequence is UPF0425 pyridoxal phosphate-dependent protein MK0620 (346 aa).

K206 is modified (N6-(pyridoxal phosphate)lysine).

Pyridoxal 5'-phosphate is required as a cofactor.

This chain is UPF0425 pyridoxal phosphate-dependent protein MK0620, found in Methanopyrus kandleri (strain AV19 / DSM 6324 / JCM 9639 / NBRC 100938).